The sequence spans 313 residues: Tyrosine recombinase XerC (313 aa).

Positions 11-97 constitute a Core-binding (CB) domain; that stretch reads NSLQKPLERF…SLRSFFDFLI (87 aa). The region spanning 118–298 is the Tyr recombinase domain; the sequence is PLPKNLDVDE…DFQHLAQAYD (181 aa). Active-site residues include R157, K181, H250, R253, and H276. Y285 (O-(3'-phospho-DNA)-tyrosine intermediate) is an active-site residue.

The protein belongs to the 'phage' integrase family. XerC subfamily. Forms a cyclic heterotetrameric complex composed of two molecules of XerC and two molecules of XerD.

Its subcellular location is the cytoplasm. Site-specific tyrosine recombinase, which acts by catalyzing the cutting and rejoining of the recombining DNA molecules. The XerC-XerD complex is essential to convert dimers of the bacterial chromosome into monomers to permit their segregation at cell division. It also contributes to the segregational stability of plasmids. The sequence is that of Tyrosine recombinase XerC from Vibrio campbellii (strain ATCC BAA-1116).